Here is a 701-residue protein sequence, read N- to C-terminus: Protein SOSEKI 1 (701 aa).

Residues 8–101 are DIX-like oligomerization domain; the sequence is LSAQVLYQLS…YVLRASELID (94 aa). Disordered regions lie at residues 238–262, 300–329, 366–389, and 538–575; these read STVH…FSPG, LPPN…SLNE, PYNT…YRTK, and IASS…LASP. Positions 306–319 are enriched in basic and acidic residues; sequence STHEDNSFWRDSRS. Residues 658-687 form a C2HC/C3H-type zinc finger; sequence ILQECSICRRTFKPDSLQVHMRGCHPPQYA. Zn(2+) contacts are provided by Cys662, Cys665, His677, and Cys681.

This sequence belongs to the SOSEKI family. In terms of assembly, homodimer. Forms long polymer filaments with other SOKs proteins polymers crucial for polar localization and biological activity. Zn(2+) is required as a cofactor.

The protein localises to the cell membrane. In terms of biological role, SOSEKI proteins locally interpret global polarity cues and can influence cell division orientation to coordinate cell polarization relative to body axes. This chain is Protein SOSEKI 1, found in Physcomitrium patens (Spreading-leaved earth moss).